We begin with the raw amino-acid sequence, 380 residues long: Cytochrome b (380 aa).

Helical transmembrane passes span Phe-34 to Met-54, Trp-78 to Ile-99, Trp-114 to Leu-134, and Phe-179 to Thr-199. His-84 and His-98 together coordinate heme b. Heme b contacts are provided by His-183 and His-197. His-202 lines the a ubiquinone pocket. The next 4 helical transmembrane spans lie at Ile-227–Ser-247, Leu-289–His-309, Leu-321–Ser-341, and Phe-348–Pro-368.

Belongs to the cytochrome b family. As to quaternary structure, the cytochrome bc1 complex contains 11 subunits: 3 respiratory subunits (MT-CYB, CYC1 and UQCRFS1), 2 core proteins (UQCRC1 and UQCRC2) and 6 low-molecular weight proteins (UQCRH/QCR6, UQCRB/QCR7, UQCRQ/QCR8, UQCR10/QCR9, UQCR11/QCR10 and a cleavage product of UQCRFS1). This cytochrome bc1 complex then forms a dimer. It depends on heme b as a cofactor.

It is found in the mitochondrion inner membrane. Its function is as follows. Component of the ubiquinol-cytochrome c reductase complex (complex III or cytochrome b-c1 complex) that is part of the mitochondrial respiratory chain. The b-c1 complex mediates electron transfer from ubiquinol to cytochrome c. Contributes to the generation of a proton gradient across the mitochondrial membrane that is then used for ATP synthesis. The polypeptide is Cytochrome b (MT-CYB) (Coturnix japonica (Japanese quail)).